A 286-amino-acid chain; its full sequence is Phosphate import ATP-binding protein PstB (286 aa).

The ABC transporter domain maps to 40–281 (VVAKDFSIFY…PRDRMTEDYI (242 aa)). 72 to 79 (GPSGCGKS) provides a ligand contact to ATP.

This sequence belongs to the ABC transporter superfamily. Phosphate importer (TC 3.A.1.7) family. As to quaternary structure, the complex is composed of two ATP-binding proteins (PstB), two transmembrane proteins (PstC and PstA) and a solute-binding protein (PstS).

The protein resides in the cell inner membrane. It carries out the reaction phosphate(out) + ATP + H2O = ADP + 2 phosphate(in) + H(+). In terms of biological role, part of the ABC transporter complex PstSACB involved in phosphate import. Responsible for energy coupling to the transport system. The sequence is that of Phosphate import ATP-binding protein PstB from Chlorobium luteolum (strain DSM 273 / BCRC 81028 / 2530) (Pelodictyon luteolum).